The primary structure comprises 343 residues: Holliday junction branch migration complex subunit RuvB (343 aa).

Residues 1 to 185 (MMNENLDATG…FGISSRLQYY (185 aa)) are large ATPase domain (RuvB-L). ATP is bound by residues leucine 24, arginine 25, glycine 66, lysine 69, threonine 70, threonine 71, 132–134 (EDY), arginine 175, tyrosine 185, and arginine 222. Position 70 (threonine 70) interacts with Mg(2+). The small ATPAse domain (RuvB-S) stretch occupies residues 186-256 (STELLSGIVE…IAKFGLKALN (71 aa)). Residues 259–343 (AHGLDEMDNK…GSNQGGLFDN (85 aa)) are head domain (RuvB-H). DNA-binding residues include arginine 314 and arginine 319.

This sequence belongs to the RuvB family. In terms of assembly, homohexamer. Forms an RuvA(8)-RuvB(12)-Holliday junction (HJ) complex. HJ DNA is sandwiched between 2 RuvA tetramers; dsDNA enters through RuvA and exits via RuvB. An RuvB hexamer assembles on each DNA strand where it exits the tetramer. Each RuvB hexamer is contacted by two RuvA subunits (via domain III) on 2 adjacent RuvB subunits; this complex drives branch migration. In the full resolvosome a probable DNA-RuvA(4)-RuvB(12)-RuvC(2) complex forms which resolves the HJ.

The protein localises to the cytoplasm. It carries out the reaction ATP + H2O = ADP + phosphate + H(+). Functionally, the RuvA-RuvB-RuvC complex processes Holliday junction (HJ) DNA during genetic recombination and DNA repair, while the RuvA-RuvB complex plays an important role in the rescue of blocked DNA replication forks via replication fork reversal (RFR). RuvA specifically binds to HJ cruciform DNA, conferring on it an open structure. The RuvB hexamer acts as an ATP-dependent pump, pulling dsDNA into and through the RuvAB complex. RuvB forms 2 homohexamers on either side of HJ DNA bound by 1 or 2 RuvA tetramers; 4 subunits per hexamer contact DNA at a time. Coordinated motions by a converter formed by DNA-disengaged RuvB subunits stimulates ATP hydrolysis and nucleotide exchange. Immobilization of the converter enables RuvB to convert the ATP-contained energy into a lever motion, pulling 2 nucleotides of DNA out of the RuvA tetramer per ATP hydrolyzed, thus driving DNA branch migration. The RuvB motors rotate together with the DNA substrate, which together with the progressing nucleotide cycle form the mechanistic basis for DNA recombination by continuous HJ branch migration. Branch migration allows RuvC to scan DNA until it finds its consensus sequence, where it cleaves and resolves cruciform DNA. This Christiangramia forsetii (strain DSM 17595 / CGMCC 1.15422 / KT0803) (Gramella forsetii) protein is Holliday junction branch migration complex subunit RuvB.